The following is a 27-amino-acid chain: Flagellar filament 31.5 kDa core protein (27 aa).

It belongs to the bacterial flagellin family. The flagellum consists of an outer layer composed of repeating units of FlaA around a core that contains one or all of five antigenically related polypeptides.

The protein resides in the periplasmic flagellum. The protein localises to the periplasm. Its function is as follows. Component of the core of the flagella. This chain is Flagellar filament 31.5 kDa core protein, found in Spirochaeta aurantia.